We begin with the raw amino-acid sequence, 415 residues long: MNNHPATLRNESSFNYWKSRIQNHDKFDEIFELTTDRQRCTPDEVKNNSLWSQYMFCKPFAPTTLKSYKSRFIKLIYCLIDDEYLNNYYDTHTLNKEFNSIVQQQPLIKPEELCRRMLELRSVTKETLQLTINFYTNTMNLPEYKIPKQVMLPRDKEIKNIKNNEKNIVLREIINTILDCIEKKIKHLSSEFVHDRGLIRGAIVFCIMLGTGMRINRSRHLSVDDLNTLIKRGKLRQAIGLKRKKHRTSNSLNSIKQKPLELAREIYIKNPNILNISKNTSTPFKDFKRLLKEANVEMDRPRSNMIRHYLSSNLYNNGMPLQKVARLMNHESSASTRHYLNKYDVGVDESDDNDEDDDDDENDDRIIDENPSGANISNYDINNSSSGNSSSNNTSGNDFNNNISSGDDADLLSFN.

One can recognise a Tyr recombinase domain in the interval 171–357; sequence REIINTILDC…DESDDNDEDD (187 aa). Active-site residues include Arg214, Lys242, Arg307, and His330. Residues 339–415 form a disordered region; sequence YLNKYDVGVD…GDDADLLSFN (77 aa). Tyr343 serves as the catalytic O-(3'-phospho-DNA)-tyrosine intermediate. Residues 346-363 are compositionally biased toward acidic residues; that stretch reads GVDESDDNDEDDDDDEND. A compositionally biased stretch (low complexity) spans 375–404; the sequence is NISNYDINNSSSGNSSSNNTSGNDFNNNIS.

This sequence belongs to the 'phage' integrase family.

In terms of biological role, involved in very late gene activation. This Heliothis zea nuclear polyhedrosis virus (HzSNPV) protein is Very late expression factor 1 (VLF-1).